A 281-amino-acid chain; its full sequence is Energy-coupling factor transporter ATP-binding protein EcfA1 (281 aa).

One can recognise an ABC transporter domain in the interval Ile6–Asp245. Gly44–Ser51 serves as a coordination point for ATP.

The protein belongs to the ABC transporter superfamily. Energy-coupling factor EcfA family. Forms a stable energy-coupling factor (ECF) transporter complex composed of 2 membrane-embedded substrate-binding proteins (S component), 2 ATP-binding proteins (A component) and 2 transmembrane proteins (T component).

The protein localises to the cell membrane. In terms of biological role, ATP-binding (A) component of a common energy-coupling factor (ECF) ABC-transporter complex. Unlike classic ABC transporters this ECF transporter provides the energy necessary to transport a number of different substrates. This is Energy-coupling factor transporter ATP-binding protein EcfA1 from Clostridium perfringens (strain ATCC 13124 / DSM 756 / JCM 1290 / NCIMB 6125 / NCTC 8237 / Type A).